The primary structure comprises 176 residues: NAD(P)H-quinone oxidoreductase subunit 6, chloroplastic (176 aa).

A run of 5 helical transmembrane segments spans residues 10–30 (ILLV…ILLT), 32–52 (TIYS…FYIL), 61–81 (AQLL…VMFM), 92–112 (IWTV…FSLI), and 152–172 (FILP…GAIA).

It belongs to the complex I subunit 6 family. In terms of assembly, NDH is composed of at least 16 different subunits, 5 of which are encoded in the nucleus.

The protein resides in the plastid. It is found in the chloroplast thylakoid membrane. The catalysed reaction is a plastoquinone + NADH + (n+1) H(+)(in) = a plastoquinol + NAD(+) + n H(+)(out). It carries out the reaction a plastoquinone + NADPH + (n+1) H(+)(in) = a plastoquinol + NADP(+) + n H(+)(out). In terms of biological role, NDH shuttles electrons from NAD(P)H:plastoquinone, via FMN and iron-sulfur (Fe-S) centers, to quinones in the photosynthetic chain and possibly in a chloroplast respiratory chain. The immediate electron acceptor for the enzyme in this species is believed to be plastoquinone. Couples the redox reaction to proton translocation, and thus conserves the redox energy in a proton gradient. The protein is NAD(P)H-quinone oxidoreductase subunit 6, chloroplastic (ndhG) of Piper cenocladum (Ant piper).